A 158-amino-acid chain; its full sequence is Transcription elongation factor GreA (158 aa).

Positions 47–73 form a coiled coil; that stretch reads AEYHAAREKQSFIEGRIQELQAKLARA.

Belongs to the GreA/GreB family.

Its function is as follows. Necessary for efficient RNA polymerase transcription elongation past template-encoded arresting sites. The arresting sites in DNA have the property of trapping a certain fraction of elongating RNA polymerases that pass through, resulting in locked ternary complexes. Cleavage of the nascent transcript by cleavage factors such as GreA or GreB allows the resumption of elongation from the new 3'terminus. GreA releases sequences of 2 to 3 nucleotides. This chain is Transcription elongation factor GreA, found in Thermodesulfovibrio yellowstonii (strain ATCC 51303 / DSM 11347 / YP87).